The sequence spans 383 residues: GTP-binding protein 10 homolog (383 aa).

The Obg domain occupies 22-157; sequence PSFLDTLRLA…RIVNLDLKLI (136 aa). One can recognise an OBG-type G domain in the interval 158–353; the sequence is ADVGLVGFPN…VKSQLRRTLV (196 aa). Residues 164–171, 211–215, and 287–290 contribute to the GTP site; these read GFPNAGKS, DLPGL, and NKMD.

This sequence belongs to the TRAFAC class OBG-HflX-like GTPase superfamily. OBG GTPase family.

It is found in the nucleus. The protein localises to the nucleolus. Functionally, may be involved in the ribosome maturation process. This is GTP-binding protein 10 homolog from Drosophila pseudoobscura pseudoobscura (Fruit fly).